Reading from the N-terminus, the 81-residue chain is Cytochrome c oxidase subunit 7B2, mitochondrial (81 aa).

The transit peptide at 1–25 (MMFPLARNALSSLKIRSILQSMARQ) directs the protein to the mitochondrion. Over 26–33 (SHVKHSPD) the chain is Mitochondrial matrix. Residues 34-60 (FHDKYGNAVLASGTAFCVVAWVFTATQ) traverse the membrane as a helical segment. Topologically, residues 61–81 (IGIEWNLSPVGRVTPKEWKHQ) are mitochondrial intermembrane.

The protein belongs to the cytochrome c oxidase VIIb family. In terms of assembly, component of the cytochrome c oxidase (complex IV, CIV), a multisubunit enzyme composed of 14 subunits. The complex is composed of a catalytic core of 3 subunits MT-CO1, MT-CO2 and MT-CO3, encoded in the mitochondrial DNA, and 11 supernumerary subunits COX4I, COX5A, COX5B, COX6A, COX6B, COX6C, COX7A, COX7B, COX7C, COX8 and NDUFA4, which are encoded in the nuclear genome. The complex exists as a monomer or a dimer and forms supercomplexes (SCs) in the inner mitochondrial membrane with NADH-ubiquinone oxidoreductase (complex I, CI) and ubiquinol-cytochrome c oxidoreductase (cytochrome b-c1 complex, complex III, CIII), resulting in different assemblies (supercomplex SCI(1)III(2)IV(1) and megacomplex MCI(2)III(2)IV(2)).

The protein resides in the mitochondrion inner membrane. It participates in energy metabolism; oxidative phosphorylation. In terms of biological role, component of the cytochrome c oxidase, the last enzyme in the mitochondrial electron transport chain which drives oxidative phosphorylation. The respiratory chain contains 3 multisubunit complexes succinate dehydrogenase (complex II, CII), ubiquinol-cytochrome c oxidoreductase (cytochrome b-c1 complex, complex III, CIII) and cytochrome c oxidase (complex IV, CIV), that cooperate to transfer electrons derived from NADH and succinate to molecular oxygen, creating an electrochemical gradient over the inner membrane that drives transmembrane transport and the ATP synthase. Cytochrome c oxidase is the component of the respiratory chain that catalyzes the reduction of oxygen to water. Electrons originating from reduced cytochrome c in the intermembrane space (IMS) are transferred via the dinuclear copper A center (CU(A)) of subunit 2 and heme A of subunit 1 to the active site in subunit 1, a binuclear center (BNC) formed by heme A3 and copper B (CU(B)). The BNC reduces molecular oxygen to 2 water molecules using 4 electrons from cytochrome c in the IMS and 4 protons from the mitochondrial matrix. This is Cytochrome c oxidase subunit 7B2, mitochondrial (COX7B2) from Macaca fascicularis (Crab-eating macaque).